An 88-amino-acid chain; its full sequence is Transmembrane protein 069R (88 aa).

A run of 2 helical transmembrane segments spans residues 30–50 (ALWPPALAYAASVAAGYVFTA) and 67–87 (VGVFLGVLCALYNWMGSGDSF).

The protein resides in the host membrane. The protein is Transmembrane protein 069R of Frog virus 3 (isolate Goorha) (FV-3).